We begin with the raw amino-acid sequence, 507 residues long: ATP synthase subunit alpha, chloroplastic (507 aa).

170–177 (GDRQTGKT) lines the ATP pocket. Phosphothreonine is present on T257.

This sequence belongs to the ATPase alpha/beta chains family. F-type ATPases have 2 components, CF(1) - the catalytic core - and CF(0) - the membrane proton channel. CF(1) has five subunits: alpha(3), beta(3), gamma(1), delta(1), epsilon(1). CF(0) has four main subunits: a, b, b' and c.

It localises to the plastid. Its subcellular location is the chloroplast thylakoid membrane. It catalyses the reaction ATP + H2O + 4 H(+)(in) = ADP + phosphate + 5 H(+)(out). Produces ATP from ADP in the presence of a proton gradient across the membrane. The alpha chain is a regulatory subunit. The polypeptide is ATP synthase subunit alpha, chloroplastic (Arabis hirsuta (Hairy rock-cress)).